A 348-amino-acid chain; its full sequence is GTP 3',8-cyclase (348 aa).

In terms of domain architecture, Radical SAM core spans 24 to 248 (PFGRAVTYLR…TDIDYQTGGP (225 aa)). R33 contributes to the GTP binding site. Residues C40 and C44 each contribute to the [4Fe-4S] cluster site. An S-adenosyl-L-methionine-binding site is contributed by Y46. C47 provides a ligand contact to [4Fe-4S] cluster. GTP is bound at residue R82. S-adenosyl-L-methionine is bound at residue G86. T115 provides a ligand contact to GTP. S139 is a binding site for S-adenosyl-L-methionine. A GTP-binding site is contributed by K175. M209 is an S-adenosyl-L-methionine binding site. [4Fe-4S] cluster-binding residues include C272 and C275. GTP is bound at residue 277-279 (RVR). C289 is a binding site for [4Fe-4S] cluster.

It belongs to the radical SAM superfamily. MoaA family. Monomer and homodimer. [4Fe-4S] cluster is required as a cofactor.

It carries out the reaction GTP + AH2 + S-adenosyl-L-methionine = (8S)-3',8-cyclo-7,8-dihydroguanosine 5'-triphosphate + 5'-deoxyadenosine + L-methionine + A + H(+). Its pathway is cofactor biosynthesis; molybdopterin biosynthesis. In terms of biological role, catalyzes the cyclization of GTP to (8S)-3',8-cyclo-7,8-dihydroguanosine 5'-triphosphate. The sequence is that of GTP 3',8-cyclase from Rhizobium etli (strain ATCC 51251 / DSM 11541 / JCM 21823 / NBRC 15573 / CFN 42).